The chain runs to 366 residues: Protein sigma-NS (366 aa).

The tract at residues 1–11 (MASSLRAAISK) is important for ssRNA-binding and formation of complexes.

It belongs to the orthoreovirus sigma-NS protein family. As to quaternary structure, homooligomer; in presence of RNA. Interacts with protein mu-NS; this interaction allows the localization of sigma-NS to the viral factories. Interacts with host G3BP1 (via C-terminus); this interaction induces the relocalization of G3BP1 and other SG proteins to the viral factories periphery.

Its subcellular location is the host cytoplasm. Protein that binds to ssRNA and participates with protein mu-NS in forming the matrix of viral factories, which are large inclusions in the host cytoplasm where replication intermediates are assembled and viral RNA replication takes place. Plays a role in the inhibition of the integrated stress response (ISR) to escape from host cell translational shutoff. Participates in the disruption of stress granules (SG) through its association with host G3BP1 and mu-NS. The chain is Protein sigma-NS (S3) from Mammalia (T3D).